The chain runs to 293 residues: Protease HtpX (293 aa).

Transmembrane regions (helical) follow at residues 4-24 and 34-54; these read IALF…VLSL and GLMI…LLMS. H139 contacts Zn(2+). Residue E140 is part of the active site. H143 contacts Zn(2+). The next 2 membrane-spanning stretches (helical) occupy residues 158–178 and 193–213; these read IVNT…AGFL and MVYF…ASII. Zn(2+) is bound at residue E222.

Belongs to the peptidase M48B family. The cofactor is Zn(2+).

Its subcellular location is the cell inner membrane. The chain is Protease HtpX from Yersinia enterocolitica serotype O:8 / biotype 1B (strain NCTC 13174 / 8081).